Consider the following 196-residue polypeptide: Large ribosomal subunit protein eL15 (196 aa).

The interval 156–196 (HRGRAERGKTSAGRKGRGMRTRGRGTEKTRPSIRSHANQGK) is disordered. Basic residues predominate over residues 167 to 178 (AGRKGRGMRTRG).

It belongs to the eukaryotic ribosomal protein eL15 family.

This chain is Large ribosomal subunit protein eL15, found in Methanoregula boonei (strain DSM 21154 / JCM 14090 / 6A8).